The sequence spans 344 residues: Serine/arginine-rich splicing factor 6 (344 aa).

The region spanning 1–72 (MPRVYIGRLS…ERVIVEHARG (72 aa)) is the RRM 1 domain. Phosphoserine is present on residues S45, S81, and S84. The disordered stretch occupies residues 75–103 (RDRDGYSYGSRSGGGGYSSRRTSGRDKYG). Positions 110 to 183 (YRLIVENLSS…RNIRLIEDKP (74 aa)) constitute an RRM 2 domain. K165 is subject to N6-acetyllysine. Residues 176 to 344 (IRLIEDKPRT…RSRSRSSSRD (169 aa)) form a disordered region. K182 is covalently cross-linked (Glycyl lysine isopeptide (Lys-Gly) (interchain with G-Cter in SUMO2)). Positions 185 to 250 (TSHRRSYSGS…RKSRSKSKSK (66 aa)) are enriched in basic residues. Basic and acidic residues-rich tracts occupy residues 264–273 (RSKDEYEKSR) and 280–291 (SPKENGKGDIKS). Phosphoserine occurs at positions 297 and 299. Position 303 is a phosphoserine; by DYRK1A (S303). 2 positions are modified to phosphoserine: S314 and S316. Residues 322 to 344 (ATSRSRSRSRSKSRSRSRSSSRD) show a composition bias toward basic residues.

It belongs to the splicing factor SR family. In terms of assembly, binds SREK1/SFRS12. Interacts with DYRK1A. Post-translationally, extensively phosphorylated on serine residues in the RS domain. Phosphorylated by DYRK1A, probably in the RS domain. Phosphorylation by DYRK1A modulates alternative splice site selection and inhibits the expression of MAPT/Tau exon 10.

The protein localises to the nucleus. It localises to the nucleus speckle. In terms of biological role, plays a role in constitutive splicing and modulates the selection of alternative splice sites. Plays a role in the alternative splicing of MAPT/Tau exon 10. Binds to alternative exons of TNC pre-mRNA and promotes the expression of alternatively spliced TNC. Plays a role in wound healing and in the regulation of keratinocyte differentiation and proliferation via its role in alternative splicing. The chain is Serine/arginine-rich splicing factor 6 (SRSF6) from Homo sapiens (Human).